Reading from the N-terminus, the 87-residue chain is MANIKSAQKRAVQSEKRRQHNASQRSMMRTFIKKVYAAVATGDKAASEAAFVEMQKVVDRMASKGLIHANKAANHKSKLAAQIKKLA.

Residues 1–26 (MANIKSAQKRAVQSEKRRQHNASQRS) form a disordered region.

It belongs to the bacterial ribosomal protein bS20 family.

Its function is as follows. Binds directly to 16S ribosomal RNA. The chain is Small ribosomal subunit protein bS20 from Glaesserella parasuis serovar 5 (strain SH0165) (Haemophilus parasuis).